We begin with the raw amino-acid sequence, 287 residues long: MYLQYLVLSLFSTTVYGGFNLNFDSKGDALENAAIDFTGEDVAVIKENERESFGITDGPLKDACGKVSGRRPDHVWLYKPTLWGDMYTMYNWREVTRTLRPIGARVVGKEQKPTIVSSQIYKNRSSRTVKMNGKISQEVTNTVENKWSQTHGLSVTASMTYSFKVVEASMEIGYTSEWGKEETKSESVAVGQEMGFEVELEPGESVEAVLSATKGSMIVDVTYRATLDGCCAINYNKGWKGHHYYCYPIGLVQDTGKLKKHVDIKETIKIGFYSDSHVIVRDKHAKK.

Residues 1–17 (MYLQYLVLSLFSTTVYG) form the signal peptide.

It belongs to the caterpillar 8 family. Contains 2 disulfide bonds. As to expression, expressed by the venom apparatus.

The protein localises to the secreted. Its function is as follows. Probable toxin. This is U-megalopygitoxin(8)-Mc8 from Megalopyge crispata (Black-waved flannel moth).